The following is a 258-amino-acid chain: 5'-nucleotidase SurE (258 aa).

Residues Asp9, Asp10, Ser42, and Asn95 each contribute to the a divalent metal cation site.

The protein belongs to the SurE nucleotidase family. A divalent metal cation serves as cofactor.

It localises to the cytoplasm. It carries out the reaction a ribonucleoside 5'-phosphate + H2O = a ribonucleoside + phosphate. Its function is as follows. Nucleotidase that shows phosphatase activity on nucleoside 5'-monophosphates. The sequence is that of 5'-nucleotidase SurE from Campylobacter concisus (strain 13826).